The chain runs to 232 residues: Ion-translocating oxidoreductase complex subunit E (232 aa).

The next 6 membrane-spanning stretches (helical) occupy residues G18–A38, I39–V59, I69–A89, G93–G113, A127–A147, and N182–I202.

Belongs to the NqrDE/RnfAE family. The complex is composed of six subunits: RnfA, RnfB, RnfC, RnfD, RnfE and RnfG.

It is found in the cell inner membrane. Part of a membrane-bound complex that couples electron transfer with translocation of ions across the membrane. The chain is Ion-translocating oxidoreductase complex subunit E from Shewanella loihica (strain ATCC BAA-1088 / PV-4).